The sequence spans 359 residues: Nicotinate-nucleotide--dimethylbenzimidazole phosphoribosyltransferase (359 aa).

The Proton acceptor role is filled by Glu-318.

This sequence belongs to the CobT family. In terms of assembly, homodimer.

The catalysed reaction is 5,6-dimethylbenzimidazole + nicotinate beta-D-ribonucleotide = alpha-ribazole 5'-phosphate + nicotinate + H(+). Its pathway is nucleoside biosynthesis; alpha-ribazole biosynthesis; alpha-ribazole from 5,6-dimethylbenzimidazole: step 1/2. Its function is as follows. Catalyzes the synthesis of alpha-ribazole-5'-phosphate from nicotinate mononucleotide (NAMN) and 5,6-dimethylbenzimidazole (DMB). The protein is Nicotinate-nucleotide--dimethylbenzimidazole phosphoribosyltransferase of Shigella sonnei (strain Ss046).